We begin with the raw amino-acid sequence, 201 residues long: Glutathione peroxidase 1 (201 aa).

Phosphoserine is present on S32. Residue U47 is part of the active site. U47 is a non-standard amino acid (selenocysteine). N6-acetyllysine; alternate is present on residues K86, K112, and K146. N6-succinyllysine; alternate occurs at positions 86, 112, and 146. S195 and S199 each carry phosphoserine.

Belongs to the glutathione peroxidase family. Homotetramer. Interacts with MIEN1. During periods of oxidative stress, Sec-47 may react with a superoxide radical, irreversibly lose hydroselenide and be converted to dehydroalanine.

It is found in the cytoplasm. It localises to the mitochondrion. It carries out the reaction 2 glutathione + H2O2 = glutathione disulfide + 2 H2O. The enzyme catalyses a hydroperoxy polyunsaturated fatty acid + 2 glutathione = a hydroxy polyunsaturated fatty acid + glutathione disulfide + H2O. It catalyses the reaction tert-butyl hydroperoxide + 2 glutathione = tert-butanol + glutathione disulfide + H2O. The catalysed reaction is cumene hydroperoxide + 2 glutathione = 2-phenylpropan-2-ol + glutathione disulfide + H2O. It carries out the reaction (13S)-hydroperoxy-(9Z,11E)-octadecadienoate + 2 glutathione = (13S)-hydroxy-(9Z,11E)-octadecadienoate + glutathione disulfide + H2O. The enzyme catalyses (9S)-hydroperoxy-(10E,12Z)-octadecadienoate + 2 glutathione = (9S)-hydroxy-(10E,12Z)-octadecadienoate + glutathione disulfide + H2O. It catalyses the reaction (5S)-hydroperoxy-(6E,8Z,11Z,14Z)-eicosatetraenoate + 2 glutathione = (5S)-hydroxy-(6E,8Z,11Z,14Z)-eicosatetraenoate + glutathione disulfide + H2O. The catalysed reaction is (12S)-hydroperoxy-(5Z,8Z,10E,14Z)-eicosatetraenoate + 2 glutathione = (12S)-hydroxy-(5Z,8Z,10E,14Z)-eicosatetraenoate + glutathione disulfide + H2O. It carries out the reaction (12R)-hydroperoxy-(5Z,8Z,10E,14Z)-eicosatetraenoate + 2 glutathione = (12R)-hydroxy-(5Z,8Z,10E,14Z)-eicosatetraenoate + glutathione disulfide + H2O. The enzyme catalyses (15S)-hydroperoxy-(5Z,8Z,11Z,13E)-eicosatetraenoate + 2 glutathione = (15S)-hydroxy-(5Z,8Z,11Z,13E)-eicosatetraenoate + glutathione disulfide + H2O. It catalyses the reaction (5S)-hydroperoxy-(6E,8Z,11Z,14Z,17Z)-eicosapentaenoate + 2 glutathione = (5S)-hydroxy-(6E,8Z,11Z,14Z,17Z)-eicosapentaenoate + glutathione disulfide + H2O. The catalysed reaction is (12S)-hydroperoxy-(5Z,8Z,10E,14Z,17Z)-eicosapentaenoate + 2 glutathione = (12S)-hydroxy-(5Z,8Z,10E,14Z,17Z)-eicosapentaenoate + glutathione disulfide + H2O. It carries out the reaction (15S)-hydroperoxy-(5Z,8Z,11Z,13E,17Z)-eicosapentaenoate + 2 glutathione = (15S)-hydroxy-(5Z,8Z,11Z,13E,17Z)-eicosapentaenoate + glutathione disulfide + H2O. The enzyme catalyses (15S)-hydroperoxy-(11Z,13E)-eicosadienoate + 2 glutathione = (15S)-hydroxy-(11Z,13E)-eicosadienoate + glutathione disulfide + H2O. It catalyses the reaction (17S)-hydroperoxy-(4Z,7Z,10Z,13Z,15E,19Z)-docosahexaenoate + 2 glutathione = (17S)-hydroxy-(4Z,7Z,10Z,13Z,15E,19Z)-docosahexaenoate + glutathione disulfide + H2O. In terms of biological role, catalyzes the reduction of hydroperoxides in a glutathione-dependent manner thus regulating cellular redox homeostasis. Can reduce small soluble hydroperoxides such as H2O2, cumene hydroperoxide and tert-butyl hydroperoxide, as well as several fatty acid-derived hydroperoxides. In platelets catalyzes the reduction of 12-hydroperoxyeicosatetraenoic acid, the primary product of the arachidonate 12-lipoxygenase pathway. The polypeptide is Glutathione peroxidase 1 (GPX1) (Macaca fuscata fuscata (Japanese macaque)).